We begin with the raw amino-acid sequence, 186 residues long: Threonylcarbamoyl-AMP synthase (186 aa).

Positions 1–186 (MADTWEAAHS…LNNQVFRDDA (186 aa)) constitute a YrdC-like domain.

This sequence belongs to the SUA5 family. TsaC subfamily.

Its subcellular location is the cytoplasm. It carries out the reaction L-threonine + hydrogencarbonate + ATP = L-threonylcarbamoyladenylate + diphosphate + H2O. Functionally, required for the formation of a threonylcarbamoyl group on adenosine at position 37 (t(6)A37) in tRNAs that read codons beginning with adenine. Catalyzes the conversion of L-threonine, HCO(3)(-)/CO(2) and ATP to give threonylcarbamoyl-AMP (TC-AMP) as the acyladenylate intermediate, with the release of diphosphate. The sequence is that of Threonylcarbamoyl-AMP synthase from Idiomarina loihiensis (strain ATCC BAA-735 / DSM 15497 / L2-TR).